Consider the following 618-residue polypeptide: Nuclear RNA export factor 1 (618 aa).

Over residues 1 to 15 (MADEGKSYNEHDDRV) the composition is skewed to basic and acidic residues. The disordered stretch occupies residues 1–113 (MADEGKSYNE…RGGAGTSQDG (113 aa)). A2 carries the N-acetylalanine modification. The interval 2 to 59 (ADEGKSYNEHDDRVSFPQRRKKGRGPFRWKCGEGNRRSGRGGSGVQSSRFEEDDGDVA) is minor non-specific RNA-binding. Positions 2–117 (ADEGKSYNEH…GTSQDGTTKN (116 aa)) are RNA-binding (RBD). Positions 2–197 (ADEGKSYNEH…IIINASAPPY (196 aa)) are interaction with ALYREF/THOC4 and LUZP4. A compositionally biased stretch (basic residues) spans 19–28 (QRRKKGRGPF). R41 is modified (asymmetric dimethylarginine; alternate). R41 bears the Omega-N-methylarginine; alternate mark. The tract at residues 60-117 (MNDPQDGPRVRYNPYTNRPNRRGDGWHDRDRIHITVRRDRAPAERGGAGTSQDGTTKN) is major non-specific RNA-binding. An RNA binding region spans residues 60 to 117 (MNDPQDGPRVRYNPYTNRPNRRGDGWHDRDRIHITVRRDRAPAERGGAGTSQDGTTKN). Residues 66–99 (GPRVRYNPYTNRPNRRGDGWHDRDRIHITVRRDR) carry the Nuclear localization signal motif. The span at 80 to 102 (RRGDGWHDRDRIHITVRRDRAPA) shows a compositional bias: basic and acidic residues. Positions 82–109 (GDGWHDRDRIHITVRRDRAPAERGGAGT) match the Nuclear export signal motif. The region spanning 118 to 197 (WFKITIPYGR…IIINASAPPY (80 aa)) is the RRM domain. The residue at position 125 (Y125) is a 3'-nitrotyrosine. LRR repeat units follow at residues 265 to 290 (ELLS…QKAP), 291 to 314 (NLKT…IKGL), 315 to 342 (KLEE…AIRE), and 343 to 370 (RFPK…TMLP). The NTF2 domain occupies 385-535 (LVLRFLQQYY…LCIVNDELFV (151 aa)). The 55-residue stretch at 564-618 (PEQQEMLQAFSTQSGMNLEWSQKCLQDNNWDYTRSAQAFTLLKAKGEIPEVAFMK) folds into the TAP-C domain.

It belongs to the NXF family. As to quaternary structure, heterodimer (via NTF2 domain) with NXT1. The formation of NXF1-NXT1 heterodimers is required for the NXF1-mediated nuclear mRNA export. Forms a complex with RANBP2/NUP358, NXT1 and RANGAP1. Associates with the exon junction complex (EJC). Associates with the transcription/export (TREX) complex. Found in a mRNA complex with UPF3A and UPF3B. Found in a post-splicing complex with RBM8A, UPF1, UPF2, UPF3A, UPF3B and RNPS1. Interacts (via N-terminus) with DHX9 (via N-terminus); this interaction is direct and negatively regulates NXF1-mediated nuclear export of constitutive transport element (CTE)-containing cellular mRNAs. Interacts with FYTTD1/UIF. Interacts with EIF4A3. Interacts with NUP42. Interacts with ALYREF/THOC4. Interacts with CHTOP. Interacts with FRG1 (via N-terminus). Interacts with LUZP4. Interacts with FMR1; the interaction occurs in a mRNA-dependent and polyribosomes-independent manner in the nucleus. Interacts with CPSF6 (via N-terminus); this interaction is direct. Interacts with RBM15. Interacts with RBM15B. Interacts with MCM3AP; this interaction is not mediated by RNA. Interacts with DDX3X (via C-terminus); this interaction may be partly involved in DDX3X nuclear export and in NXF1 localization to stress granules. Interacts with PABPC1/PABP1. As to expression, expressed ubiquitously.

It is found in the nucleus. It localises to the nucleoplasm. Its subcellular location is the nucleus speckle. The protein resides in the cytoplasm. The protein localises to the nuclear pore complex. It is found in the nucleus envelope. It localises to the stress granule. Its function is as follows. Involved in the nuclear export of mRNA species bearing retroviral constitutive transport elements (CTE) and in the export of mRNA from the nucleus to the cytoplasm (TAP/NFX1 pathway). The NXF1-NXT1 heterodimer is involved in the export of HSP70 mRNA in conjunction with ALYREF/THOC4 and THOC5 components of the TREX complex. ALYREF/THOC4-bound mRNA is thought to be transferred to the NXF1-NXT1 heterodimer for export. Also involved in nuclear export of m6A-containing mRNAs: interaction between SRSF3 and YTHDC1 facilitates m6A-containing mRNA-binding to both SRSF3 and NXF1, promoting mRNA nuclear export. In Mus musculus (Mouse), this protein is Nuclear RNA export factor 1 (Nxf1).